A 339-amino-acid chain; its full sequence is Protein-glutamate methylesterase/protein-glutamine glutaminase 2 (339 aa).

A Response regulatory domain is found at asparagine 2 to alanine 119. Aspartate 53 bears the 4-aspartylphosphate mark. Positions proline 141–proline 336 constitute a CheB-type methylesterase domain. Residues serine 158, histidine 185, and aspartate 278 contribute to the active site.

This sequence belongs to the CheB family. Post-translationally, phosphorylated by CheA. Phosphorylation of the N-terminal regulatory domain activates the methylesterase activity.

Its subcellular location is the cytoplasm. The enzyme catalyses [protein]-L-glutamate 5-O-methyl ester + H2O = L-glutamyl-[protein] + methanol + H(+). The catalysed reaction is L-glutaminyl-[protein] + H2O = L-glutamyl-[protein] + NH4(+). Involved in chemotaxis. Part of a chemotaxis signal transduction system that modulates chemotaxis in response to various stimuli. Catalyzes the demethylation of specific methylglutamate residues introduced into the chemoreceptors (methyl-accepting chemotaxis proteins or MCP) by CheR. Also mediates the irreversible deamidation of specific glutamine residues to glutamic acid. The protein is Protein-glutamate methylesterase/protein-glutamine glutaminase 2 of Burkholderia lata (strain ATCC 17760 / DSM 23089 / LMG 22485 / NCIMB 9086 / R18194 / 383).